The primary structure comprises 426 residues: Serine--tRNA ligase (426 aa).

An L-serine-binding site is contributed by 233 to 235 (TAE). Residue 264-266 (RSE) coordinates ATP. Glu287 contacts L-serine. ATP is bound at residue 351-354 (EISS). Ser387 lines the L-serine pocket.

Belongs to the class-II aminoacyl-tRNA synthetase family. Type-1 seryl-tRNA synthetase subfamily. Homodimer. The tRNA molecule binds across the dimer.

It is found in the cytoplasm. The enzyme catalyses tRNA(Ser) + L-serine + ATP = L-seryl-tRNA(Ser) + AMP + diphosphate + H(+). The catalysed reaction is tRNA(Sec) + L-serine + ATP = L-seryl-tRNA(Sec) + AMP + diphosphate + H(+). The protein operates within aminoacyl-tRNA biosynthesis; selenocysteinyl-tRNA(Sec) biosynthesis; L-seryl-tRNA(Sec) from L-serine and tRNA(Sec): step 1/1. Its function is as follows. Catalyzes the attachment of serine to tRNA(Ser). Is also able to aminoacylate tRNA(Sec) with serine, to form the misacylated tRNA L-seryl-tRNA(Sec), which will be further converted into selenocysteinyl-tRNA(Sec). In Pseudomonas syringae pv. tomato (strain ATCC BAA-871 / DC3000), this protein is Serine--tRNA ligase.